A 112-amino-acid chain; its full sequence is High mobility group protein D (112 aa).

Residues 5–71 (PKRPLSAYML…DYDRAVKEFE (67 aa)) constitute a DNA-binding region (HMG box). Serine 10 is modified (phosphoserine). Tyrosine 12 carries the post-translational modification Phosphotyrosine. The segment at 72–112 (ANGGSSAANGGGAKKRAKPAKKVAKKSKKEESDEDDDDESE) is disordered. The span at 84–98 (AKKRAKPAKKVAKKS) shows a compositional bias: basic residues. Phosphoserine occurs at positions 103 and 111. The span at 103–112 (SDEDDDDESE) shows a compositional bias: acidic residues.

Belongs to the HMGB family.

It is found in the nucleus. It localises to the chromosome. In terms of biological role, binds preferentially single-stranded DNA and unwinds double-stranded DNA. Prefers sites containing the sequence 5'-ttg-3'. Facilitates DNA bending. Associated with early embryonic chromatin in the absence of histone H1. The protein is High mobility group protein D (HmgD) of Drosophila melanogaster (Fruit fly).